The primary structure comprises 65 residues: Large ribosomal subunit protein bL35 (65 aa).

Residues 1-52 (MPKMKSNRAAAKRFKRTANGGFKSGNSFTSHRFHGKTKKQRRQLRGLSMMDK) are disordered. The span at 31 to 44 (HRFHGKTKKQRRQL) shows a compositional bias: basic residues.

The protein belongs to the bacterial ribosomal protein bL35 family.

This Limosilactobacillus reuteri (strain DSM 20016) (Lactobacillus reuteri) protein is Large ribosomal subunit protein bL35.